We begin with the raw amino-acid sequence, 250 residues long: Electron transfer flavoprotein subunit beta (250 aa).

This sequence belongs to the ETF beta-subunit/FixA family. Heterodimer of an alpha and a beta subunit. Requires FAD as cofactor. AMP is required as a cofactor.

Its subcellular location is the mitochondrion matrix. Functionally, the electron transfer flavoprotein serves as a specific electron acceptor for several dehydrogenases, including five acyl-CoA dehydrogenases, glutaryl-CoA and sarcosine dehydrogenase. It transfers the electrons to the main mitochondrial respiratory chain via ETF-ubiquinone oxidoreductase (ETF dehydrogenase). This is Electron transfer flavoprotein subunit beta (etfb) from Dictyostelium discoideum (Social amoeba).